The following is a 491-amino-acid chain: Glutamyl-tRNA(Gln) amidotransferase subunit A (491 aa).

Active-site charge relay system residues include Lys78 and Ser158. Catalysis depends on Ser182, which acts as the Acyl-ester intermediate.

The protein belongs to the amidase family. GatA subfamily. In terms of assembly, heterotrimer of A, B and C subunits.

The catalysed reaction is L-glutamyl-tRNA(Gln) + L-glutamine + ATP + H2O = L-glutaminyl-tRNA(Gln) + L-glutamate + ADP + phosphate + H(+). Allows the formation of correctly charged Gln-tRNA(Gln) through the transamidation of misacylated Glu-tRNA(Gln) in organisms which lack glutaminyl-tRNA synthetase. The reaction takes place in the presence of glutamine and ATP through an activated gamma-phospho-Glu-tRNA(Gln). The chain is Glutamyl-tRNA(Gln) amidotransferase subunit A from Nitrobacter winogradskyi (strain ATCC 25391 / DSM 10237 / CIP 104748 / NCIMB 11846 / Nb-255).